The sequence spans 326 residues: Negative regulator of the PHO system (326 aa).

The region spanning phenylalanine 8–phenylalanine 290 is the Protein kinase domain. ATP contacts are provided by residues leucine 14 to valine 22 and lysine 37. The active-site Proton acceptor is aspartate 131. Positions proline 300–tyrosine 326 are disordered. Over residues aspartate 305 to tyrosine 326 the composition is skewed to low complexity.

The protein belongs to the protein kinase superfamily. CMGC Ser/Thr protein kinase family. CDC2/CDKX subfamily. As to quaternary structure, interacts with a number of cyclins.

It catalyses the reaction L-seryl-[protein] + ATP = O-phospho-L-seryl-[protein] + ADP + H(+). The enzyme catalyses L-threonyl-[protein] + ATP = O-phospho-L-threonyl-[protein] + ADP + H(+). When phosphate concentrations are high it phosphorylates the PHO4 transcription factor thus establishing repression. The sequence is that of Negative regulator of the PHO system (PHO85) from Candida albicans (Yeast).